Consider the following 396-residue polypeptide: Elongation factor Tu (396 aa).

Residues 10–205 (KSHANIGTIG…AVDEYIPTPE (196 aa)) form the tr-type G domain. Residues 19-26 (GHVDHGKT) are G1. 19 to 26 (GHVDHGKT) lines the GTP pocket. Position 26 (T26) interacts with Mg(2+). The tract at residues 61-65 (GITIS) is G2. The interval 82-85 (DCPG) is G3. GTP contacts are provided by residues 82–86 (DCPGH) and 137–140 (NKCD). The G4 stretch occupies residues 137-140 (NKCD). The interval 175-177 (SAL) is G5. T385 carries the phosphothreonine modification.

The protein belongs to the TRAFAC class translation factor GTPase superfamily. Classic translation factor GTPase family. EF-Tu/EF-1A subfamily. As to quaternary structure, monomer. Interacts with BrxC. In terms of processing, phosphorylated on Thr-385 in vitro by PrkC in the presence of poly-L-lysine or myelin basic protein, dephosphorylated by PrpC.

It is found in the cytoplasm. The catalysed reaction is GTP + H2O = GDP + phosphate + H(+). GTP hydrolase that promotes the GTP-dependent binding of aminoacyl-tRNA to the A-site of ribosomes during protein biosynthesis. This chain is Elongation factor Tu, found in Bacillus subtilis (strain 168).